The chain runs to 335 residues: Phosphate acyltransferase (335 aa).

Belongs to the PlsX family. In terms of assembly, homodimer. Probably interacts with PlsY.

It is found in the cytoplasm. It catalyses the reaction a fatty acyl-[ACP] + phosphate = an acyl phosphate + holo-[ACP]. The protein operates within lipid metabolism; phospholipid metabolism. Catalyzes the reversible formation of acyl-phosphate (acyl-PO(4)) from acyl-[acyl-carrier-protein] (acyl-ACP). This enzyme utilizes acyl-ACP as fatty acyl donor, but not acyl-CoA. This is Phosphate acyltransferase from Streptococcus pyogenes serotype M6 (strain ATCC BAA-946 / MGAS10394).